Here is a 387-residue protein sequence, read N- to C-terminus: GTPase Obg (387 aa).

Residues 1-159 enclose the Obg domain; sequence MKFVDEVEIR…RSLKLELLLL (159 aa). Residues 160-333 enclose the OBG-type G domain; it reads ADVGLLGLPN…LTQKVMTFIE (174 aa). GTP is bound by residues 166-173, 191-195, 213-216, 283-286, and 314-316; these read GLPNAGKS, FTTLV, DIPG, NKLD, and SAF. Residues serine 173 and threonine 193 each coordinate Mg(2+). Residues 361–387 form a disordered region; sequence AAHSQDDDLDDDDWDEDDYDVEVEYRQ. A compositionally biased stretch (acidic residues) spans 367-387; it reads DDLDDDDWDEDDYDVEVEYRQ.

It belongs to the TRAFAC class OBG-HflX-like GTPase superfamily. OBG GTPase family. Monomer. It depends on Mg(2+) as a cofactor.

The protein localises to the cytoplasm. Functionally, an essential GTPase which binds GTP, GDP and possibly (p)ppGpp with moderate affinity, with high nucleotide exchange rates and a fairly low GTP hydrolysis rate. Plays a role in control of the cell cycle, stress response, ribosome biogenesis and in those bacteria that undergo differentiation, in morphogenesis control. The protein is GTPase Obg of Colwellia psychrerythraea (strain 34H / ATCC BAA-681) (Vibrio psychroerythus).